A 475-amino-acid polypeptide reads, in one-letter code: Ribulose bisphosphate carboxylase large chain (475 aa).

Positions 1–2 (MS) are excised as a propeptide. Proline 3 carries the N-acetylproline modification. An N6,N6,N6-trimethyllysine modification is found at lysine 14. Residues asparagine 123 and threonine 173 each contribute to the substrate site. Residue lysine 175 is the Proton acceptor of the active site. Lysine 177 lines the substrate pocket. Mg(2+)-binding residues include lysine 201, aspartate 203, and glutamate 204. Lysine 201 is subject to N6-carboxylysine. Residue histidine 294 is the Proton acceptor of the active site. Substrate contacts are provided by arginine 295, histidine 327, and serine 379.

Belongs to the RuBisCO large chain family. Type I subfamily. Heterohexadecamer of 8 large chains and 8 small chains; disulfide-linked. The disulfide link is formed within the large subunit homodimers. The cofactor is Mg(2+). In terms of processing, the disulfide bond which can form in the large chain dimeric partners within the hexadecamer appears to be associated with oxidative stress and protein turnover.

It is found in the plastid. The protein localises to the chloroplast. It carries out the reaction 2 (2R)-3-phosphoglycerate + 2 H(+) = D-ribulose 1,5-bisphosphate + CO2 + H2O. It catalyses the reaction D-ribulose 1,5-bisphosphate + O2 = 2-phosphoglycolate + (2R)-3-phosphoglycerate + 2 H(+). In terms of biological role, ruBisCO catalyzes two reactions: the carboxylation of D-ribulose 1,5-bisphosphate, the primary event in carbon dioxide fixation, as well as the oxidative fragmentation of the pentose substrate in the photorespiration process. Both reactions occur simultaneously and in competition at the same active site. This chain is Ribulose bisphosphate carboxylase large chain, found in Pinus pinea (Italian stone pine).